A 457-amino-acid polypeptide reads, in one-letter code: tRNA-2-methylthio-N(6)-dimethylallyladenosine synthase (457 aa).

The region spanning 3 to 120 is the MTTase N-terminal domain; that stretch reads KKVYVKTFGC…LPQMIDQRRA (118 aa). The [4Fe-4S] cluster site is built by Cys-12, Cys-49, Cys-83, Cys-157, Cys-161, and Cys-164. Residues 143-377 form the Radical SAM core domain; sequence RVEGPSAFVS…QATIEENVAR (235 aa). Residues 380-447 enclose the TRAM domain; the sequence is RSMVGKVERI…PHSLRGELLL (68 aa).

Belongs to the methylthiotransferase family. MiaB subfamily. In terms of assembly, monomer. The cofactor is [4Fe-4S] cluster.

It is found in the cytoplasm. The catalysed reaction is N(6)-dimethylallyladenosine(37) in tRNA + (sulfur carrier)-SH + AH2 + 2 S-adenosyl-L-methionine = 2-methylsulfanyl-N(6)-dimethylallyladenosine(37) in tRNA + (sulfur carrier)-H + 5'-deoxyadenosine + L-methionine + A + S-adenosyl-L-homocysteine + 2 H(+). In terms of biological role, catalyzes the methylthiolation of N6-(dimethylallyl)adenosine (i(6)A), leading to the formation of 2-methylthio-N6-(dimethylallyl)adenosine (ms(2)i(6)A) at position 37 in tRNAs that read codons beginning with uridine. This is tRNA-2-methylthio-N(6)-dimethylallyladenosine synthase from Burkholderia ambifaria (strain ATCC BAA-244 / DSM 16087 / CCUG 44356 / LMG 19182 / AMMD) (Burkholderia cepacia (strain AMMD)).